Consider the following 283-residue polypeptide: Homeobox protein six1a (283 aa).

A DNA-binding region (homeobox) is located at residues 124-183; it reads GEETSYCFKEKSRSVLREWYTHNPYPSPREKRELAEATGLTTTQVSNWFKNRRQRDRAAE. A disordered region spans residues 168–264; that stretch reads VSNWFKNRRQ…PLHGMQGHPH (97 aa). The span at 179 to 190 shows a compositional bias: basic and acidic residues; that stretch reads DRAAEAKERENG. The span at 237 to 248 shows a compositional bias: low complexity; sequence MNNPAAPAYPMP.

It belongs to the SIX/Sine oculis homeobox family.

Its subcellular location is the nucleus. The protein resides in the cytoplasm. Transcription factor that is involved in the regulation of cell proliferation, apoptosis and embryonic development. Depending on context, functions as a transcriptional repressor or activator. Plays an important role in the development of the inner ear, where it promotes hair cell proliferation and inhibits proliferation of neural progenitor cells. Required for normal myogenesis. Plays a role in the development of fast muscle fibers throughout the body, as well as the development of craniofacial muscles. The chain is Homeobox protein six1a (six1a) from Danio rerio (Zebrafish).